We begin with the raw amino-acid sequence, 887 residues long: Fibroblast growth factor receptor 2 (887 aa).

Positions 1–18 are cleaved as a signal peptide; the sequence is MLNKFIVIVTMLAMWNYA. The Extracellular segment spans residues 19–416; the sequence is QDCNFELSKN…KDCVGNSYFT (398 aa). Ig-like C2-type domains are found at residues 22–115 and 180–260; these read NFEL…EFIS and VSGS…LRMK. 9 N-linked (GlcNAc...) asparagine glycosylation sites follow: Asn-28, Asn-74, Asn-93, Asn-230, Asn-261, Asn-268, Asn-328, Asn-334, and Asn-364. An intrachain disulfide couples Cys-43 to Cys-104. Residues 297–387 enclose the Ig-like C2-type 3 domain; that stretch reads FNLNSRVCIN…YACRIINFKD (91 aa). Cys-313 and Cys-380 are joined by a disulfide. The helical transmembrane segment at 417-437 threads the bilayer; sequence IIWYSISVGIIILVVISFLII. At 438-887 the chain is on the cytoplasmic side; the sequence is RLYNKYSNGY…SNQCYSTTIV (450 aa). The region spanning 585-862 is the Protein kinase domain; it reads LIIGSKIGEG…IIDKLTHIQL (278 aa). ATP is bound by residues 591-599 and Lys-619; that span reads IGEGAFGIV. Asp-728 functions as the Proton acceptor in the catalytic mechanism. Tyr-757 is subject to Phosphotyrosine; by autocatalysis.

The protein belongs to the protein kinase superfamily. Tyr protein kinase family. Fibroblast growth factor receptor subfamily. As to expression, expressed in brain, stem cells and the mesenchymal cells.

The protein localises to the membrane. It carries out the reaction L-tyrosyl-[protein] + ATP = O-phospho-L-tyrosyl-[protein] + ADP + H(+). Functionally, receptor for basic fibroblast growth factor. In Dugesia japonica (Planarian), this protein is Fibroblast growth factor receptor 2 (FGFR2).